The primary structure comprises 504 residues: Zinc finger protein AEBP2 (504 aa).

The disordered stretch occupies residues 1–219 (MAAALADMAD…SRMDSEDSIS (219 aa)). A2 carries the post-translational modification N-acetylalanine. Residues 16 to 30 (RLSPLSPGSPGPAAR) show a composition bias toward low complexity. A phosphoserine mark is found at S18, S21, and S24. Acidic residues predominate over residues 36 to 49 (PEEEEEEDDEEAEA). The segment covering 59 to 69 (GGAGGGAGGGE) has biased composition (gly residues). Acidic residues predominate over residues 86–110 (GDEDEDEEDDEDEGSSSGGAEEESS). Residues 129 to 140 (SLSPGAASSSSG) are compositionally biased toward low complexity. Phosphoserine is present on S131. Basic and acidic residues predominate over residues 142–153 (GDGKEGLEEPKG). Composition is skewed to gly residues over residues 154–168 (PRGGPGGPGSSGGGS) and 178–189 (GDEGYGTGGGGS). Phosphoserine occurs at positions 199, 203, and 204. Residues 202–287 (MSSDGEPLSR…IHVDGQRGGV (86 aa)) are interaction with RBBP4. The C2H2-type 1 zinc finger occupies 254-279 (YNCCWDQCQACFNSSPDLADHIRSIH). A C2H2-type 2; degenerate zinc finger spans residues 293–315 (KGCKVYNTPSTSQSWLQRHMLTH). Residues 321–345 (FKCVVGGCNASFASQGGLARHVPTH) form a C2H2-type 3 zinc finger. Residues 345 to 358 (HFSQQNSSKVSSQP) are compositionally biased toward polar residues. Residues 345-387 (HFSQQNSSKVSSQPKAKEESPSKAGMNKRRKLKNKRRRSLPRP) form a disordered region. Positions 370–385 (MNKRRKLKNKRRRSLP) are enriched in basic residues. S383 is modified (phosphoserine). The interval 400–471 (RHRAICFNLS…QLKTKVVHLS (72 aa)) is interaction with SUZ12. The interval 488-504 (TMPQKRLKRFDILNFPR) is important for nucleosome binding activity of the PRC2 complex.

Belongs to the AEBP2/jing C2H2-type zinc-finger family. In terms of assembly, self-associates. Associates with the PRC2 complex, which consists of the core components EED, EZH1 or EZH2, SUZ12, and RBBP4, and various combinations of accessory subunits including AEBP2, JARID2, PHF19, MTF2 and EPOP. Found in a monomeric PRC2.2 (class 2) complex consisting of at least SUZ12, RBBP4, AEBP2 and JARID2. Within the PRC2 complex, interacts directly with SUZ12; competes with PHF19 for SUZ12 binding. Interacts with EED, EZH2, and RBBP4. May also interact with RBBP7. In terms of tissue distribution, expressed in brain, brown adipose tissue, white adipose tissue, heart, kidney, lung, skeletal muscle, small intestine and spleen. Expressed at low levels in liver.

It localises to the nucleus. In terms of biological role, acts as an accessory subunit for the core Polycomb repressive complex 2 (PRC2), which mediates histone H3K27 (H3K27me3) trimethylation on chromatin leading to transcriptional repression of the affected target gene. Plays a role in nucleosome localization of the PRC2 complex. The chain is Zinc finger protein AEBP2 (Aebp2) from Mus musculus (Mouse).